A 328-amino-acid polypeptide reads, in one-letter code: Tryptophan--tRNA ligase (328 aa).

ATP-binding positions include 9-11 and 17-18; these read QPS and GN. A 'HIGH' region motif is present at residues 10-18; the sequence is PSGVITIGN. Asp132 is an L-tryptophan binding site. ATP is bound by residues 144 to 146, Ile183, and 192 to 196; these read GED and KMSKS. Positions 192-196 match the 'KMSKS' region motif; the sequence is KMSKS.

It belongs to the class-I aminoacyl-tRNA synthetase family. In terms of assembly, homodimer.

The protein localises to the cytoplasm. The catalysed reaction is tRNA(Trp) + L-tryptophan + ATP = L-tryptophyl-tRNA(Trp) + AMP + diphosphate + H(+). Inhibited by indolmycin, a competitive inhibitor for tryptophan. In terms of biological role, catalyzes the attachment of tryptophan to tRNA(Trp). In Geobacillus stearothermophilus (Bacillus stearothermophilus), this protein is Tryptophan--tRNA ligase.